The chain runs to 474 residues: MHDIKAIRDNQQAFEAAWSAKGRSGAAAEAVKLDALLRAAQTALQEAQAKRNESSKLIGMAKAKKDEAEATRLMAEVEHLKAVMASAAQTETEVGGQLRDLLASLPNIPAPEVPAGEDEAGNVEIRRWGDASKLPAGRLNNPKDHVDLGAALGGMDFEAAARMSGARFVVLKGQIARLERALGQFMLDLQTVQHGYTEVSPPLLVKDEALFGTGQLPKFKADLFKTSEQNWVERLDEQIALRVPPLLNITQTDVVENLKGLRAAASMDEQAARWLIPTAEVSLTNIVREQITDEAELPLRMTALTPSFRSEAGASGRDTRGMIRQHQFYKVELVSITTPDQSDEEHERMVGCAEAVLKALELPFRTMLLCTGDMGFGAKKTYDLEVWLPSQNTYREISSCSNCGDFQARRMDARFKKVGEKGARYVHTLNGSGLAVGRTLVAVLENYQDETGRITVPAVLVPYMGGVTHIGGEA.

278-280 (TAE) is a binding site for L-serine. 309–311 (RSE) is an ATP binding site. E332 serves as a coordination point for L-serine. 396–399 (EISS) serves as a coordination point for ATP. S432 lines the L-serine pocket.

Belongs to the class-II aminoacyl-tRNA synthetase family. Type-1 seryl-tRNA synthetase subfamily. In terms of assembly, homodimer. The tRNA molecule binds across the dimer.

The protein localises to the cytoplasm. It catalyses the reaction tRNA(Ser) + L-serine + ATP = L-seryl-tRNA(Ser) + AMP + diphosphate + H(+). It carries out the reaction tRNA(Sec) + L-serine + ATP = L-seryl-tRNA(Sec) + AMP + diphosphate + H(+). It functions in the pathway aminoacyl-tRNA biosynthesis; selenocysteinyl-tRNA(Sec) biosynthesis; L-seryl-tRNA(Sec) from L-serine and tRNA(Sec): step 1/1. In terms of biological role, catalyzes the attachment of serine to tRNA(Ser). Is also able to aminoacylate tRNA(Sec) with serine, to form the misacylated tRNA L-seryl-tRNA(Sec), which will be further converted into selenocysteinyl-tRNA(Sec). The polypeptide is Serine--tRNA ligase (Caulobacter sp. (strain K31)).